Here is a 424-residue protein sequence, read N- to C-terminus: MELSYRLFICLLLWGSTELCYPQPLRLLQGGTSHPETALQPVVVECQEATLVVTVSKDLFGTRKLIRAVDLTLGPEGCEPLVSTDTEDVVRFEVGLHECGNSMQVTDDALVYSTFLLHDPRPVGNLSIVRTNRAEIPIECRYPRRGNVSSQAILPTWLPFRTTVFSEEKLTFSLRLMEENWSTEKRTPTFHLGDVAHLQAEIHTGSHVPLRLFVDHCVATPTPDQNASPYHTIVDFHGCLVDGLTDASSAFQAPRPRPDTLQFTVDVFHFANDSRNMIYITCHLKVTLAEQDPDELNKACSFSKASNSWFPVEGPADICQCCSKGDCGTPSHARRQPHVVSLGSGSPARDRRHVTEEADVTVGPLIFLDRTGDHEMEQWALPADTSLLLLGTGLAVVALLTLTAVILVLTRRCRTASLPVSASE.

The first 22 residues, 1–22 (MELSYRLFICLLLWGSTELCYP), serve as a signal peptide directing secretion. The residue at position 23 (glutamine 23) is a Pyrrolidone carboxylic acid. At 23–387 (QPLRLLQGGT…QWALPADTSL (365 aa)) the chain is on the extracellular side. Residue threonine 32 is glycosylated (O-linked (GalNAc...) threonine). The ZP domain maps to 45-307 (ECQEATLVVT…KACSFSKASN (263 aa)). 2 cysteine pairs are disulfide-bonded: cysteine 46–cysteine 140 and cysteine 78–cysteine 99. Asparagine 125 and asparagine 147 each carry an N-linked (GlcNAc...) asparagine glycan. Threonine 156, threonine 162, and threonine 163 each carry an O-linked (GalNAc...) threonine glycan. Asparagine 180 and asparagine 272 each carry an N-linked (GlcNAc...) asparagine glycan. 2 disulfides stabilise this stretch: cysteine 217/cysteine 282 and cysteine 239/cysteine 300. Positions 351–424 (RRHVTEEADV…TASLPVSASE (74 aa)) are cleaved as a propeptide — removed in mature form. Residues 388–408 (LLLGTGLAVVALLTLTAVILV) traverse the membrane as a helical segment. Residues 409–424 (LTRRCRTASLPVSASE) lie on the Cytoplasmic side of the membrane.

The protein belongs to the ZP domain family. ZPC subfamily. In terms of assembly, polymers of ZP2 and ZP3 organized into long filaments cross-linked by ZP1 homodimers. Interacts with ZP1 and ZP2. In terms of processing, proteolytically cleaved before the transmembrane segment to yield the secreted ectodomain incorporated in the zona pellucida. Post-translationally, N-glycosylated. O-glycosylated; removal of O-linked glycans may play an important role in the post-fertilization block to polyspermy. As to expression, expressed in oocytes.

Its subcellular location is the zona pellucida. The protein localises to the cell membrane. In terms of biological role, component of the zona pellucida, an extracellular matrix surrounding oocytes which mediates sperm binding, induction of the acrosome reaction and prevents post-fertilization polyspermy. The zona pellucida is composed of 3 to 4 glycoproteins, ZP1, ZP2, ZP3, and ZP4. ZP3 is essential for sperm binding and zona matrix formation. The polypeptide is Zona pellucida sperm-binding protein 3 (ZP3) (Callithrix sp. (Marmoset)).